The chain runs to 861 residues: Importin subunit beta-1 (861 aa).

An N-acetylserine modification is found at Ser2. HEAT repeat units lie at residues 3–35, 37–66, 90–129, 134–164, 177–208, 219–255, 260–306, 317–362, 367–395, 402–442, 452–484, 496–530, 536–586, 592–629, 634–669, 675–713, 718–764, 773–812, and 819–859; these read TAEF…LSND, FLQF…LTLK, PEAK…ELPH, ELMK…YMCE, SNNI…LADS, EGER…MSLY, KPYM…ELAQ, FALS…AQNC, LEPV…AFGS, KVQR…ADSV, LPGV…VEQL, YPAL…MVEY, AETS…VIRK, EPVA…AASL, EKYL…ISNS, RRYS…ASNI, IPYL…IVAG, FPYV…IAAM, and KQFY…KRQL. Positions 25–106 constitute an Importin N-terminal domain; sequence SETQLKKLSN…KTNALTALVS (82 aa). At Ser836 the chain carries Phosphoserine.

The protein belongs to the importin beta family. Importin beta-1 subfamily. In terms of assembly, forms a complex with the importin alpha subunit (SRP1/KAP60). Interacts with Ran (GSP1); interacts specifically with the GTP-bound form of Ran (GTP-Ran), protecting it from GTP hydrolysis and nucleotide exchange. Interacts with nucleoporin NUP1.

It is found in the cytoplasm. The protein resides in the nucleus. The protein localises to the nuclear pore complex. In terms of biological role, importin beta subunit that functions in nuclear protein import through association with the importin alpha subunit, which binds to the classical nuclear localization signal (cNLS) in cargo substrates. Docking of the importin/substrate complex to the nuclear pore complex (NPC) is mediated by importin beta through binding to nucleoporin FxFG repeats and the complex is subsequently translocated through the pore by an energy requiring, Ran-dependent mechanism. At the nucleoplasmic side of the NPC, GTP-Ran binds to importin beta and the three components separate, leading to release of the cargo. Importin alpha and beta are re-exported from the nucleus to the cytoplasm where GTP hydrolysis releases Ran from importin beta. The directionality of nuclear import is thought to be conferred by an asymmetric distribution of the GTP- and GDP-bound forms of Ran between the cytoplasm and nucleus. Mediates the nuclear import of histones H2A and H2B. Mediates the nuclear import of transcription factor GCN4. The protein is Importin subunit beta-1 of Saccharomyces cerevisiae (strain ATCC 204508 / S288c) (Baker's yeast).